A 333-amino-acid chain; its full sequence is Taste receptor type 2 member 38 (333 aa).

At 1 to 17 the chain is on the extracellular side; that stretch reads MLTLTRIHTVSYEVRST. The chain crosses the membrane as a helical span at residues 18–38; it reads FLFISVLEFAVGFLTNAFVFL. Residues 39 to 55 are Cytoplasmic-facing; that stretch reads VNFWDVVKRQPLSNSDC. The helical transmembrane segment at 56-76 threads the bilayer; it reads VLLCLSISRLFLHGLLFLSAI. Topologically, residues 77 to 94 are extracellular; it reads QLTHFQKLSEPLNHSYQA. The helical transmembrane segment at 95–115 threads the bilayer; that stretch reads IIMLWMIANQANLWLAACLSL. At 116–142 the chain is on the cytoplasmic side; sequence LYCSKLIRFSHTFLICLASWVSRKISQ. Residues 143 to 163 form a helical membrane-spanning segment; sequence MLLGIILCSCICTVLCVWCFF. Residues 164-190 are Extracellular-facing; sequence SRPHFTVTTVLFMNNNTRLNWQIKDLN. A glycan (N-linked (GlcNAc...) asparagine) is linked at Asn-178. The chain crosses the membrane as a helical span at residues 191 to 211; that stretch reads LFYSFLFCYLWSVPPFLLFLV. Over 212 to 251 the chain is Cytoplasmic; that stretch reads SSGMLTVSLGRHMRTMKVYTRDSRDPSLEAHIKALKSLVS. The chain crosses the membrane as a helical span at residues 252–272; sequence FFCFFVISSCAAFISVPLLIL. Over 273–276 the chain is Extracellular; the sequence is WRDK. The chain crosses the membrane as a helical span at residues 277–297; that stretch reads IGVMVCVGIMAACPSGHAAVL. The Cytoplasmic portion of the chain corresponds to 298-333; the sequence is ISGNAKLRRAVTTILLWAQSSLKVRADHKADSRTLC.

It belongs to the G-protein coupled receptor T2R family.

It is found in the membrane. Receptor that may play a role in the perception of bitterness and is gustducin-linked. May play a role in sensing the chemical composition of the gastrointestinal content. The activity of this receptor may stimulate alpha gustducin, mediate PLC-beta-2 activation and lead to the gating of TRPM5. The polypeptide is Taste receptor type 2 member 38 (TAS2R38) (Pan troglodytes (Chimpanzee)).